The primary structure comprises 226 residues: UPF0173 metal-dependent hydrolase Minf_0129 (226 aa).

The protein belongs to the UPF0173 family.

In Methylacidiphilum infernorum (isolate V4) (Methylokorus infernorum (strain V4)), this protein is UPF0173 metal-dependent hydrolase Minf_0129.